We begin with the raw amino-acid sequence, 538 residues long: MFRRNLITSAILLMAPLAFSAQSLAESLTVEQRLELLEKALRETQSELKKYKDEEKKKYTPATVNRSVSTNDQGYAANPFPTSSAAKPDAVLVKNEEKNASETGSIYSSMTLKDFSKFVKDEIGFSYNGYYRSGWGTASHGSPKSWAIGSLGRFGNEYSGWFDLQLKQRVYNENGKRVDAVVMMDGNVGQQYSTGWFGDNAGGENYMQFSDMYVTTKGFLPFAPEADFWVGKHGAPKIEIQMLDWKTQRTDAAAGVGLENWKVGPGKIDIALVREDVDDYDRSLQNKQQINTNTIDLRYKDIPLWDKATLMVSGRYVTANESASEKDNQDNNGYYDWKDTWMFGTSLTQKFDKGGFNEFSFLVANNSIASNFGRYAGASPFTTFNGRYYGDHTGGTAVRLTSQGEAYIGDHFIVANAIVYSFGNDIYSYETGAHSDFESIRAVVRPAYIWDQYNQTGVELGYFTQQNKDANSNKFNESGYKTTLFHTFKVNTSMLTSRPEIRFYATYIKALENELDGFTFEDNKDDQFAVGAQAEIWW.

An N-terminal signal peptide occupies residues 1-25; it reads MFRRNLITSAILLMAPLAFSAQSLA. A disordered region spans residues 52-82; it reads KDEEKKKYTPATVNRSVSTNDQGYAANPFPT. The span at 62-73 shows a compositional bias: polar residues; the sequence is ATVNRSVSTNDQ.

This sequence belongs to the porin LamB (TC 1.B.3) family. Homomonomer; no physical evidence of a homotrimer has been found, however conductance experiments suggest it may be a homotrimer. The monomer probably consists of 18 antiparallel beta-strands.

It localises to the cell outer membrane. In terms of biological role, part of a cryptic operon that is poorly expressed in vivo. May be an ancestral sugar porin with a broad carbohydrate specificity; it binds aromatic beta-D-glucosides such as arbutin and salicin, but with low affinity compared to the binding of maltooligosaccharides to the LamB porin. The sequence is that of Cryptic outer membrane porin BglH (bglH) from Escherichia coli (strain K12).